Here is a 183-residue protein sequence, read N- to C-terminus: Ribose 1,5-bisphosphate phosphokinase PhnN (183 aa).

6-13 (GPSGAGKD) provides a ligand contact to ATP.

This sequence belongs to the ribose 1,5-bisphosphokinase family.

It catalyses the reaction alpha-D-ribose 1,5-bisphosphate + ATP = 5-phospho-alpha-D-ribose 1-diphosphate + ADP. It participates in metabolic intermediate biosynthesis; 5-phospho-alpha-D-ribose 1-diphosphate biosynthesis; 5-phospho-alpha-D-ribose 1-diphosphate from D-ribose 5-phosphate (route II): step 3/3. Functionally, catalyzes the phosphorylation of ribose 1,5-bisphosphate to 5-phospho-D-ribosyl alpha-1-diphosphate (PRPP). In Agrobacterium fabrum (strain C58 / ATCC 33970) (Agrobacterium tumefaciens (strain C58)), this protein is Ribose 1,5-bisphosphate phosphokinase PhnN.